The sequence spans 696 residues: Glycine--tRNA ligase beta subunit (696 aa).

Belongs to the class-II aminoacyl-tRNA synthetase family. In terms of assembly, tetramer of two alpha and two beta subunits.

The protein localises to the cytoplasm. The catalysed reaction is tRNA(Gly) + glycine + ATP = glycyl-tRNA(Gly) + AMP + diphosphate. In Nitratidesulfovibrio vulgaris (strain ATCC 29579 / DSM 644 / CCUG 34227 / NCIMB 8303 / VKM B-1760 / Hildenborough) (Desulfovibrio vulgaris), this protein is Glycine--tRNA ligase beta subunit.